A 485-amino-acid polypeptide reads, in one-letter code: Two-component response regulator ORR31 (485 aa).

A Response regulatory domain is found at 13–138; the sequence is RVMPVDGDTK…TMAQLWRVVA (126 aa). 4-aspartylphosphate is present on D66. Residues 195-204 show a composition bias toward polar residues; it reads LTINVDSGSS. The interval 195–236 is disordered; the sequence is LTINVDSGSSDGADANPRQKLEHKKDAKGPLGQHVASHLQPQ. Residues 211–222 show a composition bias toward basic and acidic residues; sequence PRQKLEHKKDAK.

Belongs to the ARR family. Type-B subfamily. In terms of processing, two-component system major event consists of a His-to-Asp phosphorelay between a sensor histidine kinase (HK) and a response regulator (RR). In plants, the His-to-Asp phosphorelay involves an additional intermediate named Histidine-containing phosphotransfer protein (HPt). This multistep phosphorelay consists of a His-Asp-His-Asp sequential transfer of a phosphate group between first a His and an Asp of the HK protein, followed by the transfer to a conserved His of the HPt protein and finally the transfer to an Asp in the receiver domain of the RR protein.

In terms of biological role, functions as a response regulator involved in His-to-Asp phosphorelay signal transduction system. Phosphorylation of the Asp residue in the receiver domain activates the ability of the protein to promote the transcription of target genes. May directly activate some type-A response regulators in response to cytokinins. The protein is Two-component response regulator ORR31 of Oryza sativa subsp. japonica (Rice).